We begin with the raw amino-acid sequence, 258 residues long: Uroplakin-1a (258 aa).

The Cytoplasmic portion of the chain corresponds to 1–14; sequence MASAAAATTEKGSP. Residues 15 to 35 form a helical membrane-spanning segment; sequence VVVGLLVMGNIIILLSGLALF. The Extracellular portion of the chain corresponds to 36 to 59; the sequence is AETVWVTADQYRIYPLMGVSGKDD. The helical transmembrane segment at 60–86 threads the bilayer; that stretch reads VFAGAWIAIFCGFSFFVVASFGVGAAL. At 87-91 the chain is on the cytoplasmic side; it reads CRRRS. Residues 92-112 form a helical membrane-spanning segment; that stretch reads MILTYLILMLIIYIFECASCI. Residues 113–230 lie on the Extracellular side of the membrane; that stretch reads TSYTHRDYMV…HIGHAIDSYT (118 aa). N-linked (GlcNAc...) asparagine glycosylation is present at N170. A helical transmembrane segment spans residues 231-252; the sequence is WGISWFGFAILMWTLPVMLIAM. Residues 253–258 are Cytoplasmic-facing; that stretch reads YFYTTL.

This sequence belongs to the tetraspanin (TM4SF) family. As to quaternary structure, homodimer; disulfide-linked. Interacts with uroplakin-2 (UPK2). The N-terminus is blocked. Post-translationally, N-glycosylated with high-mannose oligosaccharides. Bladder epithelium.

The protein resides in the membrane. Functionally, component of the asymmetric unit membrane (AUM); a highly specialized biomembrane elaborated by terminally differentiated urothelial cells. May play an important role in normal bladder epithelial physiology, possibly in regulating membrane permeability of superficial umbrella cells or in stabilizing the apical membrane through AUM/cytoskeletal interactions. This Bos taurus (Bovine) protein is Uroplakin-1a (UPK1A).